Reading from the N-terminus, the 1032-residue chain is Kinesin heavy chain isoform 5A (1032 aa).

Ala2 carries the N-acetylalanine modification. The Kinesin motor domain maps to 9 to 327 (SIKVLCRFRP…LMFGQRAKTI (319 aa)). 86–93 (GQTSSGKT) provides a ligand contact to ATP. The interval 174–315 (VSGPEEILDV…PSSYNDAETK (142 aa)) is microtubule-binding. A necessary for interaction with ZFYVE27 region spans residues 271-361 (EGTKSYVPYR…KTKAQKETIA (91 aa)). Residues 331–906 (ASVNLELTAE…VDRIKEAVRY (576 aa)) are a coiled coil. Residues 353-1032 (TKAQKETIAK…FPLHQETAAS (680 aa)) form an interaction with BICD2 region. A Phosphothreonine modification is found at Thr397. A disordered region spans residues 904–939 (VRYKSSGKRGHSAQIAKPVRPGHYPASSPTNPYGTR). The globular stretch occupies residues 907 to 1032 (KSSGKRGHSA…FPLHQETAAS (126 aa)).

This sequence belongs to the TRAFAC class myosin-kinesin ATPase superfamily. Kinesin family. Kinesin subfamily. Oligomer composed of two heavy chains and two light chains. Interacts with GRIP1. Interacts with FMR1 (via C-terminus); this interaction is increased in a mGluR-dependent manner. Interacts with BORCS5. Interacts with ZFYVE27. Interacts with VAPA, VAPB, SURF4, RAB11A (GDP-bound form), RAB11B (GDP-bound form) and RTN3 in a ZFYVE27-dependent manner. Interacts with BICD2. Interacts with DTNB.

The protein resides in the cytoplasm. Its subcellular location is the perinuclear region. It localises to the cytoskeleton. The protein localises to the perikaryon. The enzyme catalyses ATP + H2O + a kinesin associated with a microtubule at position (n) = ADP + phosphate a kinesin associated with a microtubule at position (n+1, toward the plus end).. In terms of biological role, microtubule-dependent motor required for slow axonal transport of neurofilament proteins (NFH, NFM and NFL). Can induce formation of neurite-like membrane protrusions in non-neuronal cells in a ZFYVE27-dependent manner. The ZFYVE27-KIF5A complex contributes to the vesicular transport of VAPA, VAPB, SURF4, RAB11A, RAB11B and RTN3 proteins in neurons. Required for anterograde axonal transportation of MAPK8IP3/JIP3 which is essential for MAPK8IP3/JIP3 function in axon elongation. The chain is Kinesin heavy chain isoform 5A (KIF5A) from Pongo abelii (Sumatran orangutan).